A 388-amino-acid chain; its full sequence is Putative C-&gt;U-editing enzyme APOBEC-4 (388 aa).

The region spanning 60-176 (PQTKHLTFYE…AWNREALRGL (117 aa)) is the CMP/dCMP-type deaminase domain. His-92 contributes to the Zn(2+) binding site. Glu-94 functions as the Proton donor in the catalytic mechanism. 2 residues coordinate Zn(2+): Cys-126 and Cys-133. The tract at residues 322–356 (KVKALRKSPSGRPVKKEEARKGSTRSQEANETNKS) is disordered.

This sequence belongs to the cytidine and deoxycytidylate deaminase family. Zn(2+) is required as a cofactor.

In terms of biological role, putative C to U editing enzyme whose physiological substrate is not yet known. The sequence is that of Putative C-&gt;U-editing enzyme APOBEC-4 (Apobec4) from Rattus norvegicus (Rat).